Here is a 445-residue protein sequence, read N- to C-terminus: Histamine H3 receptor (445 aa).

The Extracellular portion of the chain corresponds to 1-39 (MERAPPDGPLNASGALAGEAAAAGGARGFSAAWTAVLAA). Residue Asn-11 is glycosylated (N-linked (GlcNAc...) asparagine). Residues 40 to 60 (LMALLIVATVLGNALVMLAFV) traverse the membrane as a helical segment. Residues 61–70 (ADSSLRTQNN) are Cytoplasmic-facing. Residues 71 to 91 (FFLLNLAISDFLVGAFCIPLY) traverse the membrane as a helical segment. Over 92-108 (VPYVLTGRWTFGRGLCK) the chain is Extracellular. An intrachain disulfide couples Cys-107 to Cys-188. The helical transmembrane segment at 109–129 (LWLVVDYLLCTSSAFNIVLIS) threads the bilayer. The Cytoplasmic segment spans residues 130–156 (YDRFLSVTRAVSYRAQQGDTRRAVRKM). A helical transmembrane segment spans residues 157-177 (LLVWVLAFLLYGPAILSWEYL). The Extracellular segment spans residues 178-196 (SGGSSIPEGHCYAEFFYNW). The chain crosses the membrane as a helical span at residues 197–217 (YFLITASTLEFFTPFLSVTFF). The Cytoplasmic portion of the chain corresponds to 218-359 (NLSIYLNIQR…LSRDRKVAKS (142 aa)). Disordered regions lie at residues 237-260 (REAA…GCWG) and 288-336 (EATL…LEKR). A compositionally biased stretch (pro residues) spans 242–257 (PEPPPEAQPSPPPPPG). A compositionally biased stretch (gly residues) spans 290–299 (TLGGGGGGGS). Residues 300–312 (VASPTSSSGSSSR) are compositionally biased toward low complexity. The helical transmembrane segment at 360 to 380 (LAVIVSIFGLCWAPYTLLMII) threads the bilayer. At 381–395 (RAACHGHCVPDYWYE) the chain is on the extracellular side. Residues 396-416 (TSFWLLWANSAVNPVLYPLCH) form a helical membrane-spanning segment. Topologically, residues 417 to 445 (HSFRRAFTKLLCPQKLKIQPHSSLEHCWK) are cytoplasmic. The residue at position 439 (Ser-439) is a Phosphoserine.

This sequence belongs to the G-protein coupled receptor 1 family. As to expression, expressed predominantly in the CNS, with the greatest expression in the thalamus and caudate nucleus. The various isoforms are mainly coexpressed in brain, but their relative expression level varies in a region-specific manner. Isoform 3 and isoform 7 are highly expressed in the thalamus, caudate nucleus and cerebellum while isoform 5 and isoform 6 show a poor expression. Isoform 5 and isoform 6 show a high expression in the amygdala, substantia nigra, cerebral cortex and hypothalamus. Isoform 7 is not found in hypothalamus or substantia nigra.

It localises to the cell membrane. Its function is as follows. The H3 subclass of histamine receptors could mediate the histamine signals in CNS and peripheral nervous system. Signals through the inhibition of adenylate cyclase and displays high constitutive activity (spontaneous activity in the absence of agonist). Agonist stimulation of isoform 3 neither modified adenylate cyclase activity nor induced intracellular calcium mobilization. This chain is Histamine H3 receptor (HRH3), found in Homo sapiens (Human).